Consider the following 242-residue polypeptide: Orotidine 5'-phosphate decarboxylase (242 aa).

Residues D16, K37, 64–73 (DLKFHDIPNT), T128, R190, Q199, G219, and R220 each bind substrate. The active-site Proton donor is the K66.

Belongs to the OMP decarboxylase family. Type 1 subfamily. As to quaternary structure, homodimer.

The catalysed reaction is orotidine 5'-phosphate + H(+) = UMP + CO2. Its pathway is pyrimidine metabolism; UMP biosynthesis via de novo pathway; UMP from orotate: step 2/2. Its function is as follows. Catalyzes the decarboxylation of orotidine 5'-monophosphate (OMP) to uridine 5'-monophosphate (UMP). The polypeptide is Orotidine 5'-phosphate decarboxylase (Prochlorococcus marinus (strain AS9601)).